The sequence spans 370 residues: 3-dehydroquinate synthase (370 aa).

NAD(+) is bound by residues 108–112 (GVIGD), 132–133 (TT), K145, and K154. Zn(2+) contacts are provided by E187, H249, and H267.

It belongs to the sugar phosphate cyclases superfamily. Dehydroquinate synthase family. Co(2+) serves as cofactor. The cofactor is Zn(2+). It depends on NAD(+) as a cofactor.

The protein localises to the cytoplasm. It catalyses the reaction 7-phospho-2-dehydro-3-deoxy-D-arabino-heptonate = 3-dehydroquinate + phosphate. Its pathway is metabolic intermediate biosynthesis; chorismate biosynthesis; chorismate from D-erythrose 4-phosphate and phosphoenolpyruvate: step 2/7. Catalyzes the conversion of 3-deoxy-D-arabino-heptulosonate 7-phosphate (DAHP) to dehydroquinate (DHQ). This is 3-dehydroquinate synthase from Cereibacter sphaeroides (strain ATCC 17025 / ATH 2.4.3) (Rhodobacter sphaeroides).